We begin with the raw amino-acid sequence, 333 residues long: Protoheme IX farnesyltransferase (333 aa).

Helical transmembrane passes span 64 to 84 (LICT…LNCL), 110 to 130 (TVFL…ISGV), 133 to 153 (LAAG…TVIL), 161 to 181 (IVFG…AATG), 189 to 209 (WLFG…AILL), 246 to 266 (IMGV…LLPF), and 287 to 307 (AKSL…LLLI).

This sequence belongs to the UbiA prenyltransferase family. Protoheme IX farnesyltransferase subfamily.

It is found in the cell inner membrane. It catalyses the reaction heme b + (2E,6E)-farnesyl diphosphate + H2O = Fe(II)-heme o + diphosphate. The protein operates within porphyrin-containing compound metabolism; heme O biosynthesis; heme O from protoheme: step 1/1. In terms of biological role, converts heme B (protoheme IX) to heme O by substitution of the vinyl group on carbon 2 of heme B porphyrin ring with a hydroxyethyl farnesyl side group. The sequence is that of Protoheme IX farnesyltransferase from Prochlorococcus marinus (strain MIT 9312).